The primary structure comprises 350 residues: Glycerol-1-phosphate dehydrogenase [NAD(P)+] (350 aa).

NAD(+) is bound by residues 97 to 101 (GSIID) and 119 to 122 (TTAS). Residue Asp124 participates in substrate binding. An NAD(+)-binding site is contributed by Ser128. Asp171 lines the substrate pocket. The Zn(2+) site is built by Asp171 and His251. Residue His255 coordinates substrate. His267 contacts Zn(2+).

It belongs to the glycerol-1-phosphate dehydrogenase family. Zn(2+) serves as cofactor.

Its subcellular location is the cytoplasm. The catalysed reaction is sn-glycerol 1-phosphate + NAD(+) = dihydroxyacetone phosphate + NADH + H(+). The enzyme catalyses sn-glycerol 1-phosphate + NADP(+) = dihydroxyacetone phosphate + NADPH + H(+). The protein operates within membrane lipid metabolism; glycerophospholipid metabolism. Catalyzes the NAD(P)H-dependent reduction of dihydroxyacetonephosphate (DHAP or glycerone phosphate) to glycerol 1-phosphate (G1P). The G1P thus generated is used as the glycerophosphate backbone of phospholipids in the cellular membranes of Archaea. The protein is Glycerol-1-phosphate dehydrogenase [NAD(P)+] of Thermococcus sibiricus (strain DSM 12597 / MM 739).